We begin with the raw amino-acid sequence, 348 residues long: Nicotinate-nucleotide--dimethylbenzimidazole phosphoribosyltransferase (348 aa).

The Proton acceptor role is filled by Glu315.

It belongs to the CobT family.

The catalysed reaction is 5,6-dimethylbenzimidazole + nicotinate beta-D-ribonucleotide = alpha-ribazole 5'-phosphate + nicotinate + H(+). It participates in nucleoside biosynthesis; alpha-ribazole biosynthesis; alpha-ribazole from 5,6-dimethylbenzimidazole: step 1/2. Catalyzes the synthesis of alpha-ribazole-5'-phosphate from nicotinate mononucleotide (NAMN) and 5,6-dimethylbenzimidazole (DMB). The protein is Nicotinate-nucleotide--dimethylbenzimidazole phosphoribosyltransferase of Dechloromonas aromatica (strain RCB).